The following is a 633-amino-acid chain: Endosomal/prevacuolar sodium/hydrogen exchanger (633 aa).

The N-terminal stretch at 1 to 21 is a signal peptide; that stretch reads MLSKVLLNIAFKVLLTTAKRA. Topologically, residues 22 to 61 are lumenal; it reads VDPDDDDELLPSPDLPGSDDPIAGDPDVDLNPVTEEMFSS. The disordered stretch occupies residues 25–44; that stretch reads DDDDELLPSPDLPGSDDPIA. Residues 31–42 are compositionally biased toward low complexity; sequence LPSPDLPGSDDP. A helical transmembrane segment spans residues 62–82; that stretch reads WALFIMLLLLISALWSSYYLT. Over 83-85 the chain is Cytoplasmic; it reads QKR. A helical transmembrane segment spans residues 86 to 106; sequence IRAVHETVLSIFYGMVIGLII. Over 107–117 the chain is Lumenal; sequence RMSPGHYIQDT. A helical membrane pass occupies residues 118–138; sequence VTFNSSYFFNVLLPPIILNSG. The Amiloride-binding signature appears at 124–133; it reads YFFNVLLPPI. Residues 139-152 lie on the Cytoplasmic side of the membrane; sequence YELNQVNFFNNMLS. The helical transmembrane segment at 153 to 173 threads the bilayer; sequence ILIFAIPGTFISAVVIGIILY. Residues 174–189 lie on the Lumenal side of the membrane; that stretch reads IWTFLGLESIDISFAD. Residues 190–211 traverse the membrane as a helical segment; the sequence is AMSVGATLSATDPVTILSIFNA. Residues 212–217 are Cytoplasmic-facing; the sequence is YKVDPK. The helical transmembrane segment at 218–238 threads the bilayer; sequence LYTIIFGESLLNDAISIVMFE. The Lumenal portion of the chain corresponds to 239-258; sequence TCQKFHGQPATFSSVFEGAG. The chain crosses the membrane as a helical span at residues 259 to 279; it reads LFLMTFSVSLLIGVLIGILVA. The Cytoplasmic portion of the chain corresponds to 280 to 288; that stretch reads LLLKHTHIR. The chain crosses the membrane as a helical span at residues 289–308; sequence RYPQIESCLILLIAYESYFF. Topologically, residues 309-313 are lumenal; sequence SNGCH. The helical transmembrane segment at 314–333 threads the bilayer; that stretch reads MSGIVSLLFCGITLKHYAYY. Residues 334–344 lie on the Cytoplasmic side of the membrane; it reads NMSRRSQITIK. The chain crosses the membrane as a helical span at residues 345–364; that stretch reads YIFQLLARLSENFIFIYLGL. Residues 365–376 lie on the Cytoplasmic side of the membrane; it reads ELFTEVELVYKP. The chain crosses the membrane as a helical span at residues 377–397; sequence LLIIVAAISICVARWCAVFPL. Residues 398 to 431 lie on the Lumenal side of the membrane; sequence SQFVNWIYRVKTIRSMSGITGENISVPDEIPYNY. Asn420 carries N-linked (GlcNAc...) asparagine glycosylation. The chain crosses the membrane as a helical span at residues 432–452; sequence QMMTFWAGLRGAVGVALALGI. The Cytoplasmic portion of the chain corresponds to 453 to 457; it reads QGEYK. Residues 458 to 478 form a helical membrane-spanning segment; it reads FTLLATVLVVVVLTVIIFGGT. A Phosphothreonine modification is found at Thr490. A Phosphoserine modification is found at Ser494. Thr498 carries the phosphothreonine modification. Ser499 carries the phosphoserine modification. N-linked (GlcNAc...) asparagine glycans are attached at residues Asn515, Asn550, and Asn563. The segment at 553 to 578 is disordered; sequence TTGGNTFGGLNETENTSPNPARSSMD. Residues 564–574 are compositionally biased toward polar residues; sequence ETENTSPNPAR. Ser569 carries the post-translational modification Phosphoserine.

The protein belongs to the monovalent cation:proton antiporter 1 (CPA1) transporter (TC 2.A.36) family. Interacts with CYP6.

The protein resides in the endosome membrane. It is found in the prevacuolar compartment membrane. Functionally, endosomal/prevacuolar electroneutral Na(+)/H(+) exchanger which mediates intracellular sequestration of Na(+) cations, regulates vacuolar pH and contributes to osmotolerance following sudden exposure to hyperosmotic media. Also contributes to the postdiauxic/stationary phase resistance to osmotic stress and allows for the continued growth of cells until the acquired osmotolerance response can occur. Involved in hygromycin resistance probably through its influence on the electrochemical proton gradient affecting secondarily the entrance of hygromycin. Mediates pH-dependent vesicle trafficking out of the endosome. Contributes to K(+) sequestration and homeostasis. The chain is Endosomal/prevacuolar sodium/hydrogen exchanger (NHX1) from Saccharomyces cerevisiae (strain ATCC 204508 / S288c) (Baker's yeast).